The sequence spans 396 residues: Elongation factor Tu 2 (396 aa).

In terms of domain architecture, tr-type G spans 10–206 (KPHVNVGTIG…ALDSYIPLPE (197 aa)). Positions 19-26 (GHVDHGKT) are G1. 19–26 (GHVDHGKT) is a GTP binding site. A Mg(2+)-binding site is contributed by Thr-26. A G2 region spans residues 60-64 (GITIN). A G3 region spans residues 81-84 (DCPG). GTP-binding positions include 81 to 85 (DCPGH) and 136 to 139 (NKCD). The tract at residues 136–139 (NKCD) is G4. Residues 174–176 (SAK) form a G5 region.

This sequence belongs to the TRAFAC class translation factor GTPase superfamily. Classic translation factor GTPase family. EF-Tu/EF-1A subfamily. In terms of assembly, monomer.

Its subcellular location is the cytoplasm. The enzyme catalyses GTP + H2O = GDP + phosphate + H(+). GTP hydrolase that promotes the GTP-dependent binding of aminoacyl-tRNA to the A-site of ribosomes during protein biosynthesis. The sequence is that of Elongation factor Tu 2 from Albidiferax ferrireducens (strain ATCC BAA-621 / DSM 15236 / T118) (Rhodoferax ferrireducens).